An 81-amino-acid chain; its full sequence is Translational regulator CsrA (81 aa).

This sequence belongs to the CsrA/RsmA family. As to quaternary structure, homodimer; the beta-strands of each monomer intercalate to form a hydrophobic core, while the alpha-helices form wings that extend away from the core.

The protein resides in the cytoplasm. A translational regulator that binds mRNA to regulate translation initiation and/or mRNA stability. Usually binds in the 5'-UTR at or near the Shine-Dalgarno sequence preventing ribosome-binding, thus repressing translation. Its main target seems to be the major flagellin gene, while its function is anatagonized by FliW. This chain is Translational regulator CsrA, found in Desulforapulum autotrophicum (strain ATCC 43914 / DSM 3382 / VKM B-1955 / HRM2) (Desulfobacterium autotrophicum).